Here is a 435-residue protein sequence, read N- to C-terminus: Serine--tRNA ligase (435 aa).

239–241 (TAE) serves as a coordination point for L-serine. 270 to 272 (RAE) serves as a coordination point for ATP. Glu293 lines the L-serine pocket. 357–360 (EISS) provides a ligand contact to ATP. Ser393 serves as a coordination point for L-serine.

This sequence belongs to the class-II aminoacyl-tRNA synthetase family. Type-1 seryl-tRNA synthetase subfamily. In terms of assembly, homodimer. The tRNA molecule binds across the dimer.

It localises to the cytoplasm. It carries out the reaction tRNA(Ser) + L-serine + ATP = L-seryl-tRNA(Ser) + AMP + diphosphate + H(+). The enzyme catalyses tRNA(Sec) + L-serine + ATP = L-seryl-tRNA(Sec) + AMP + diphosphate + H(+). It participates in aminoacyl-tRNA biosynthesis; selenocysteinyl-tRNA(Sec) biosynthesis; L-seryl-tRNA(Sec) from L-serine and tRNA(Sec): step 1/1. Catalyzes the attachment of serine to tRNA(Ser). Is also able to aminoacylate tRNA(Sec) with serine, to form the misacylated tRNA L-seryl-tRNA(Sec), which will be further converted into selenocysteinyl-tRNA(Sec). The chain is Serine--tRNA ligase from Parvibaculum lavamentivorans (strain DS-1 / DSM 13023 / NCIMB 13966).